The primary structure comprises 522 residues: Non-structural maintenance of chromosome element 6 (522 aa).

The segment covering 482 to 492 (KQKDRYFKDKT) has biased composition (basic and acidic residues). The interval 482-522 (KQKDRYFKDKTSNLSMKENKSFSAKKVKKGKKKNKRQAYKR) is disordered. The span at 504 to 522 (SAKKVKKGKKKNKRQAYKR) shows a compositional bias: basic residues.

In terms of assembly, component of the smc5/smc6 complex which consists of two subcomplexes, smc5-smc6-nse2 and nse1-nse2-nse4. Interacts with nse5.

Its subcellular location is the nucleus. It localises to the chromosome. In terms of biological role, acts in a DNA repair pathway for removal of UV-induced DNA damage that is distinct from classical nucleotide excision repair and in repair of ionizing radiation damage. Functions in homologous recombination repair of DNA double strand breaks and in recovery of stalled replication forks. May prevent formation of excessive Holliday junctions or assist in their resolution. This chain is Non-structural maintenance of chromosome element 6 (nse6), found in Schizosaccharomyces pombe (strain 972 / ATCC 24843) (Fission yeast).